Reading from the N-terminus, the 105-residue chain is Urease subunit beta (105 aa).

It belongs to the urease beta subunit family. As to quaternary structure, heterotrimer of UreA (gamma), UreB (beta) and UreC (alpha) subunits. Three heterotrimers associate to form the active enzyme.

Its subcellular location is the cytoplasm. The enzyme catalyses urea + 2 H2O + H(+) = hydrogencarbonate + 2 NH4(+). It functions in the pathway nitrogen metabolism; urea degradation; CO(2) and NH(3) from urea (urease route): step 1/1. The sequence is that of Urease subunit beta from Pseudomonas entomophila (strain L48).